Reading from the N-terminus, the 433-residue chain is Enolase (433 aa).

Residue glutamine 164 participates in (2R)-2-phosphoglycerate binding. The Proton donor role is filled by glutamate 206. Aspartate 243, glutamate 289, and aspartate 316 together coordinate Mg(2+). Residues lysine 341, arginine 370, serine 371, and lysine 392 each contribute to the (2R)-2-phosphoglycerate site. The Proton acceptor role is filled by lysine 341.

Belongs to the enolase family. Mg(2+) is required as a cofactor.

The protein resides in the cytoplasm. It is found in the secreted. Its subcellular location is the cell surface. The catalysed reaction is (2R)-2-phosphoglycerate = phosphoenolpyruvate + H2O. The protein operates within carbohydrate degradation; glycolysis; pyruvate from D-glyceraldehyde 3-phosphate: step 4/5. In terms of biological role, catalyzes the reversible conversion of 2-phosphoglycerate (2-PG) into phosphoenolpyruvate (PEP). It is essential for the degradation of carbohydrates via glycolysis. In Borreliella burgdorferi (strain ZS7) (Borrelia burgdorferi), this protein is Enolase.